The sequence spans 327 residues: Aquaporin-1 (327 aa).

Positions 1–34 are disordered; that stretch reads MSSNDSNDTDKQHTRLDPTGVDDAYIPPEQPETK. The Cytoplasmic portion of the chain corresponds to 1–48; sequence MSSNDSNDTDKQHTRLDPTGVDDAYIPPEQPETKHHRFKISRDTLRNH. A helical transmembrane segment spans residues 49–69; it reads FIAAVGEFCGTFMFLWCAYVI. Residues 70-91 are Extracellular-facing; it reads CNVANHDVALVAAPDGSHPGQL. The chain crosses the membrane as a helical span at residues 92–112; it reads IMIAIGFGFSVMFSIWCFAGV. Topologically, residues 113–136 are cytoplasmic; that stretch reads SGGALNPAVSLSLCLARAVSPTRC. The NPA 1 signature appears at 118–120; sequence NPA. A helical transmembrane segment spans residues 137-157; it reads VVMWVSQIVAGMAAGGAASAM. At 158-176 the chain is on the extracellular side; the sequence is TPGEVLFANSLGLGCSRTR. Residues 177–197 traverse the membrane as a helical segment; that stretch reads GLFLEMFGTAILCLTVLMTAV. At 198–203 the chain is on the cytoplasmic side; the sequence is EKRETN. A helical membrane pass occupies residues 204-224; the sequence is FMAALPIGISLFIAHVALTAY. The Extracellular portion of the chain corresponds to 225–248; it reads TGTGVNPARSLGAAVAARYFPHYH. The NPA 2 motif lies at 230-232; sequence NPA. A helical membrane pass occupies residues 249-269; that stretch reads WIYWIGPLLGSILAWSVWQLL. Residues 270 to 327 are Cytoplasmic-facing; that stretch reads QILDYTTYVTAEKAASTKEKAQKKVKPAVPLLWLKSNFPLLFFISRSLALNVIIFGKN.

Belongs to the MIP/aquaporin (TC 1.A.8) family.

Its subcellular location is the endoplasmic reticulum membrane. It is found in the cell membrane. Its function is as follows. Water channel required to facilitate the transport of water across membranes. Involved in sporulation, freeze tolerance and osmotolerance. Is non-functional in most laboratory strains. This chain is Aquaporin-1 (AQY1), found in Saccharomyces cerevisiae (Baker's yeast).